The chain runs to 247 residues: F-box and leucine-rich protein 22 (247 aa).

An F-box domain is found at 6-52 (TMHITQLNRECLLHLFSFLDKDSRKSLARTCSQLHDVFEDPALWSLL). Disordered stretches follow at residues 124-154 (SPRR…PDHS) and 173-247 (GLGS…AFPQ). The segment covering 184–200 (ETPPAPGVSWGPPPPGA) has biased composition (pro residues).

As to quaternary structure, directly interacts with SKP1 and CUL1. In terms of tissue distribution, enriched in cardiac muscle.

The protein resides in the cytoplasm. It localises to the myofibril. Its subcellular location is the sarcomere. It is found in the z line. It functions in the pathway protein modification; protein ubiquitination. In terms of biological role, substrate-recognition component of the SCF (SKP1-CUL1-F-box protein)-type E3 ubiquitin ligase complex. Promotes ubiquitination of sarcomeric proteins alpha-actinin-2 (ACTN2) and filamin-C (FLNC). This is F-box and leucine-rich protein 22 (FBXL22) from Homo sapiens (Human).